The following is a 244-amino-acid chain: tRNA pseudouridine synthase A (244 aa).

Asp-52 serves as the catalytic Nucleophile. Tyr-110 is a binding site for substrate.

This sequence belongs to the tRNA pseudouridine synthase TruA family. As to quaternary structure, homodimer.

The catalysed reaction is uridine(38/39/40) in tRNA = pseudouridine(38/39/40) in tRNA. Its function is as follows. Formation of pseudouridine at positions 38, 39 and 40 in the anticodon stem and loop of transfer RNAs. The polypeptide is tRNA pseudouridine synthase A (Geotalea uraniireducens (strain Rf4) (Geobacter uraniireducens)).